A 195-amino-acid polypeptide reads, in one-letter code: Imidazoleglycerol-phosphate dehydratase (195 aa).

This sequence belongs to the imidazoleglycerol-phosphate dehydratase family.

It is found in the cytoplasm. The enzyme catalyses D-erythro-1-(imidazol-4-yl)glycerol 3-phosphate = 3-(imidazol-4-yl)-2-oxopropyl phosphate + H2O. It functions in the pathway amino-acid biosynthesis; L-histidine biosynthesis; L-histidine from 5-phospho-alpha-D-ribose 1-diphosphate: step 6/9. This is Imidazoleglycerol-phosphate dehydratase from Polynucleobacter asymbioticus (strain DSM 18221 / CIP 109841 / QLW-P1DMWA-1) (Polynucleobacter necessarius subsp. asymbioticus).